The primary structure comprises 562 residues: Dihydroxy-acid dehydratase (562 aa).

D80 serves as a coordination point for Mg(2+). C121 is a [2Fe-2S] cluster binding site. Mg(2+) is bound by residues D122 and K123. K123 carries the post-translational modification N6-carboxylysine. Residue C194 participates in [2Fe-2S] cluster binding. Mg(2+) is bound at residue E446. The Proton acceptor role is filled by S472.

This sequence belongs to the IlvD/Edd family. In terms of assembly, homodimer. It depends on [2Fe-2S] cluster as a cofactor. Mg(2+) serves as cofactor.

The enzyme catalyses (2R)-2,3-dihydroxy-3-methylbutanoate = 3-methyl-2-oxobutanoate + H2O. It catalyses the reaction (2R,3R)-2,3-dihydroxy-3-methylpentanoate = (S)-3-methyl-2-oxopentanoate + H2O. It participates in amino-acid biosynthesis; L-isoleucine biosynthesis; L-isoleucine from 2-oxobutanoate: step 3/4. The protein operates within amino-acid biosynthesis; L-valine biosynthesis; L-valine from pyruvate: step 3/4. Its function is as follows. Functions in the biosynthesis of branched-chain amino acids. Catalyzes the dehydration of (2R,3R)-2,3-dihydroxy-3-methylpentanoate (2,3-dihydroxy-3-methylvalerate) into 2-oxo-3-methylpentanoate (2-oxo-3-methylvalerate) and of (2R)-2,3-dihydroxy-3-methylbutanoate (2,3-dihydroxyisovalerate) into 2-oxo-3-methylbutanoate (2-oxoisovalerate), the penultimate precursor to L-isoleucine and L-valine, respectively. This is Dihydroxy-acid dehydratase from Staphylococcus haemolyticus (strain JCSC1435).